Reading from the N-terminus, the 288-residue chain is Phosphatidylserine decarboxylase proenzyme (288 aa).

Catalysis depends on charge relay system; for autoendoproteolytic cleavage activity residues aspartate 90, histidine 147, and serine 252. Serine 252 serves as the catalytic Schiff-base intermediate with substrate; via pyruvic acid; for decarboxylase activity. Pyruvic acid (Ser); by autocatalysis is present on serine 252.

Belongs to the phosphatidylserine decarboxylase family. PSD-B subfamily. Prokaryotic type I sub-subfamily. In terms of assembly, heterodimer of a large membrane-associated beta subunit and a small pyruvoyl-containing alpha subunit. Pyruvate is required as a cofactor. Post-translationally, is synthesized initially as an inactive proenzyme. Formation of the active enzyme involves a self-maturation process in which the active site pyruvoyl group is generated from an internal serine residue via an autocatalytic post-translational modification. Two non-identical subunits are generated from the proenzyme in this reaction, and the pyruvate is formed at the N-terminus of the alpha chain, which is derived from the carboxyl end of the proenzyme. The autoendoproteolytic cleavage occurs by a canonical serine protease mechanism, in which the side chain hydroxyl group of the serine supplies its oxygen atom to form the C-terminus of the beta chain, while the remainder of the serine residue undergoes an oxidative deamination to produce ammonia and the pyruvoyl prosthetic group on the alpha chain. During this reaction, the Ser that is part of the protease active site of the proenzyme becomes the pyruvoyl prosthetic group, which constitutes an essential element of the active site of the mature decarboxylase.

Its subcellular location is the cell membrane. The catalysed reaction is a 1,2-diacyl-sn-glycero-3-phospho-L-serine + H(+) = a 1,2-diacyl-sn-glycero-3-phosphoethanolamine + CO2. It functions in the pathway phospholipid metabolism; phosphatidylethanolamine biosynthesis; phosphatidylethanolamine from CDP-diacylglycerol: step 2/2. In terms of biological role, catalyzes the formation of phosphatidylethanolamine (PtdEtn) from phosphatidylserine (PtdSer). The polypeptide is Phosphatidylserine decarboxylase proenzyme (Pseudomonas fluorescens (strain ATCC BAA-477 / NRRL B-23932 / Pf-5)).